Here is a 1387-residue protein sequence, read N- to C-terminus: DNA-directed RNA polymerase subunit beta (1387 aa).

The protein belongs to the RNA polymerase beta chain family. As to quaternary structure, the RNAP catalytic core consists of 2 alpha, 1 beta, 1 beta' and 1 omega subunit. When a sigma factor is associated with the core the holoenzyme is formed, which can initiate transcription.

The enzyme catalyses RNA(n) + a ribonucleoside 5'-triphosphate = RNA(n+1) + diphosphate. DNA-dependent RNA polymerase catalyzes the transcription of DNA into RNA using the four ribonucleoside triphosphates as substrates. The chain is DNA-directed RNA polymerase subunit beta from Xanthomonas campestris pv. campestris (strain ATCC 33913 / DSM 3586 / NCPPB 528 / LMG 568 / P 25).